We begin with the raw amino-acid sequence, 478 residues long: MASISAATATSSTKLVSSNSTNPLLPSSTKPSKLILSSSFTPNCSTLFLHSPATPSSTATHRHRRFTVRAARGKFERKKPHVNIGTIGHVDHGKTTLTAALTMALASMGNSAPKKYDEIDAAPEERARGITINTATVEYETENRHYAHVDCPGHADYVKNMITGAAQMDGAILVCSGADGPMPQTKEHILLAKQVGVPNMVVFLNKQDQVDDEELLQLVELEVRELLSSYEFPGDDIPIISGSALLALEALMANPSIKRGENQWVDKIYELMDAVDSYIPIPVRQTELPFLMAIEDVFSITGRGTVATGRVERGTVRIGDTVDIVGLKDTRSTTVTGVEMFQKILDEAMAGDNVGLLLRGIQKIDIQRGMVLAKPGTITPHTKFEAIVYVLKKEEGGRHSPFFSGYRPQFYMRTTDVTGKVTSITTDKGEESKMVMPGDRVNLVVELIMPVACEQGMRFAIREGGKTVGAGVIQKIIE.

The span at 1–29 shows a compositional bias: low complexity; sequence MASISAATATSSTKLVSSNSTNPLLPSST. The interval 1 to 31 is disordered; that stretch reads MASISAATATSSTKLVSSNSTNPLLPSSTKP. The transit peptide at 1–69 directs the protein to the chloroplast; the sequence is MASISAATAT…THRHRRFTVR (69 aa). Residues 79-283 form the tr-type G domain; that stretch reads KPHVNIGTIG…AVDSYIPIPV (205 aa). Residues 88–95 form a G1 region; that stretch reads GHVDHGKT. Residue 88-95 coordinates GTP; sequence GHVDHGKT. Positions 129 to 133 are G2; that stretch reads GITIN. The tract at residues 150–153 is G3; that stretch reads DCPG. GTP is bound by residues 150–154 and 205–208; these read DCPGH and NKQD. The interval 205-208 is G4; the sequence is NKQD. The interval 243 to 245 is G5; that stretch reads SAL.

Belongs to the TRAFAC class translation factor GTPase superfamily. Classic translation factor GTPase family. EF-Tu/EF-1A subfamily.

It localises to the plastid. It is found in the chloroplast. Its function is as follows. This protein promotes the GTP-dependent binding of aminoacyl-tRNA to the A-site of ribosomes during protein biosynthesis. The protein is Elongation factor Tu, chloroplastic (TUFA) of Nicotiana tabacum (Common tobacco).